The chain runs to 565 residues: Efflux pump aunC (565 aa).

The span at Met-1–Ser-14 shows a compositional bias: polar residues. Residues Met-1–Asp-57 are disordered. Residues Ser-38–Arg-54 show a composition bias toward basic and acidic residues. 14 consecutive transmembrane segments (helical) span residues Gly-59–Cys-79, Asp-103–Gly-123, Phe-128–Ile-148, Val-164–Val-184, Gly-194–Phe-214, Trp-222–Phe-242, Ala-257–Leu-277, Ile-293–Trp-313, Leu-335–Phe-355, Val-378–Met-398, Leu-399–Ser-419, Ile-425–Val-445, Thr-457–Ala-477, and Val-530–Ile-550.

The protein belongs to the major facilitator superfamily. TCR/Tet family.

The protein localises to the cell membrane. Its function is as follows. Efflux pump; part of the gene cluster that mediates the biosynthesis of aurasperone B, a dimeric gamma-naphthopyrone. The chain is Efflux pump aunC from Aspergillus niger (strain ATCC MYA-4892 / CBS 513.88 / FGSC A1513).